A 210-amino-acid chain; its full sequence is Proteasome subunit beta 2 (210 aa).

Residues 1–12 constitute a propeptide, removed in mature form; by autocatalysis; the sequence is MSNNVEEKILHG. Catalysis depends on Thr-13, which acts as the Nucleophile.

This sequence belongs to the peptidase T1B family. In terms of assembly, the 20S proteasome core is composed of 14 alpha and 14 beta subunits that assemble into four stacked heptameric rings, resulting in a barrel-shaped structure. The two inner rings, each composed of seven catalytic beta subunits, are sandwiched by two outer rings, each composed of seven alpha subunits. The catalytic chamber with the active sites is on the inside of the barrel. Has a gated structure, the ends of the cylinder being occluded by the N-termini of the alpha-subunits. Is capped at one or both ends by the proteasome regulatory ATPase, PAN.

The protein resides in the cytoplasm. It catalyses the reaction Cleavage of peptide bonds with very broad specificity.. Its activity is regulated as follows. The formation of the proteasomal ATPase PAN-20S proteasome complex, via the docking of the C-termini of PAN into the intersubunit pockets in the alpha-rings, triggers opening of the gate for substrate entry. Interconversion between the open-gate and close-gate conformations leads to a dynamic regulation of the 20S proteasome proteolysis activity. In terms of biological role, component of the proteasome core, a large protease complex with broad specificity involved in protein degradation. The polypeptide is Proteasome subunit beta 2 (Cenarchaeum symbiosum (strain A)).